Consider the following 128-residue polypeptide: Holin-like protein CidA (128 aa).

4 consecutive transmembrane segments (helical) span residues 4–24, 27–46, 59–79, and 88–108; these read LLLTVIQIALLFIFARLINWV, ALHINIPGSIIGIVILFTLL, GAAWLLGELLLFFIPSAVGVI, and FGVSILLVVVISTFVVMVSTG.

It belongs to the CidA/LrgA family. CidA subfamily.

The protein localises to the cell membrane. Increases the activity of extracellular murein hydrolases possibly by mediating their export via hole formation. Inhibited by the antiholin-like proteins LrgAB. In an unstressed cell, the LrgAB products probably inhibit the function of the CidA protein. When a cell is stressed by the addition of antibiotics or by other factors in the environment, CidA possibly oligomerizes within the bacterial cell membrane, creating lesions that disrupt the proton motive force, which in turn results in loss of cell viability. These lesions are also hypothesized to regulate the subsequent cell lysis by either allowing the murein hydrolases access to the cell wall substrate and/or regulating their activity by a possible change in the cell wall pH that results from loss of membrane potential. This chain is Holin-like protein CidA, found in Bacillus velezensis (strain DSM 23117 / BGSC 10A6 / LMG 26770 / FZB42) (Bacillus amyloliquefaciens subsp. plantarum).